A 454-amino-acid polypeptide reads, in one-letter code: L-cysteine desulfhydrase-like protein lolT1 (454 aa).

Lys-227 is modified (N6-(pyridoxal phosphate)lysine).

Belongs to the class-V pyridoxal-phosphate-dependent aminotransferase family. The cofactor is pyridoxal 5'-phosphate.

Its pathway is alkaloid biosynthesis. L-cysteine desulfhydrase-like protein; part of the gene cluster that mediates the biosynthesis of loline alkaloids, potent insecticidal agents composed of a pyrrolizidine ring system and an uncommon ether bridge linking carbons 2 and 7. Lolines are structurally differentiated by the various modifications of the L-amino group and include norloline, loline, N-methylloline, N-acetylloline, N-acetylnorloline, and N-formylloline. The first committed step is the condensation of O-acetyl-L-homoserine (derived from L-aspartic acid) and L-proline, probably catalyzed by the gamma-type pyridoxal 5'-phosphate(PLP)-dependent enzyme lolC, to give the diamino diacid, NACPP. Ensuing cyclization, decarboxylation, and acetylation steps yield 1-exo-acetamidopyrrolizidine (AcAP). LolO is required for installation of the ether bridge upon the pathway intermediate, 1-exo-acetamidopyrrolizidine (AcAP). In sequential 2-oxoglutarate- and O(2)-consuming steps, lolO removes hydrogens from C2 and C7 of AcAP to form both carbon-oxygen bonds in N-acetylnorloline (NANL), the precursor to all other lolines. The enzymes lolD, lolE, lolF and lolT have also been proposed to be involved in the ether-bridge installation. Further processing of the exocyclic moiety of NANL by fungal N-acetamidase (LolN), methyltransferase (LolM), and cytochrome P450 (LolP) enzymes, with occasional involvement of a plant acetyltransferase, generates the other known lolines. LolN transforms NANL to norlonine which is monomethylated and dimethylated to respectively lonine and N-methyllonine (NML) by lolM. LolP catalyzes hydroxylation of the methyl group in N-methylloline (NML) and further oxygenation to N-formylloline (NFL). A plant acetyltransferase is responsible for the acetylation of loline to form N-acetylloline (NAL). LolA might interact with aspartate kinase to prevent feedback inhibition of its activity by these end products and thereby promote production of L-homoserine from L-aspartate. This is L-cysteine desulfhydrase-like protein lolT1 from Epichloe uncinata (Endophyte fungus).